Here is a 322-residue protein sequence, read N- to C-terminus: Malate dehydrogenase 1 (322 aa).

NAD(+) is bound by residues 10–15 (GSGQIG) and aspartate 34. Substrate-binding residues include arginine 83 and arginine 89. NAD(+) contacts are provided by residues asparagine 96 and 119 to 121 (ITN). The substrate site is built by asparagine 121 and arginine 152. The active-site Proton acceptor is the histidine 176.

The protein belongs to the LDH/MDH superfamily. MDH type 3 family.

The enzyme catalyses (S)-malate + NAD(+) = oxaloacetate + NADH + H(+). In terms of biological role, catalyzes the reversible oxidation of malate to oxaloacetate. The sequence is that of Malate dehydrogenase 1 from Rhodopseudomonas palustris (strain BisB18).